Reading from the N-terminus, the 453-residue chain is Probable exopolygalacturonase B (453 aa).

Positions 1–16 are cleaved as a signal peptide; it reads MKFFALAALFASTVNS. N-linked (GlcNAc...) asparagine glycans are attached at residues Asn185 and Asn225. Asp255 acts as the Proton donor in catalysis. Residues Cys257 and Cys274 are joined by a disulfide bond. N-linked (GlcNAc...) asparagine glycans are attached at residues Asn263 and Asn275. Residue His278 is part of the active site. 2 PbH1 repeats span residues 295–316 and 327–348; these read IENV…RLKA and INNV…VLDQ. Residues Asn302, Asn329, Asn354, and Asn366 are each glycosylated (N-linked (GlcNAc...) asparagine). The PbH1 3 repeat unit spans residues 362–405; the sequence is PSRVNFTNIVFEDIYGTSSGKRGKVVADLTCSPNAVCSGIRLKN. A disulfide bond links Cys392 and Cys398. The N-linked (GlcNAc...) asparagine glycan is linked to Asn436.

It belongs to the glycosyl hydrolase 28 family.

The protein localises to the secreted. The catalysed reaction is [(1-&gt;4)-alpha-D-galacturonosyl](n) + H2O = alpha-D-galacturonate + [(1-&gt;4)-alpha-D-galacturonosyl](n-1). Functionally, specific in hydrolyzing the terminal glycosidic bond of polygalacturonic acid and oligogalacturonates. This Aspergillus fumigatus (strain CBS 144.89 / FGSC A1163 / CEA10) (Neosartorya fumigata) protein is Probable exopolygalacturonase B (pgxB).